Consider the following 393-residue polypeptide: MNDVDATDTFVGQGKFRGAISTSPSHIMQTCGFIQQMFPVEMSPGIESEDDPNYDVNMDIQSFNIFDGVHETEAEASVALCAEARVGINKAGFVILKTFTPGAEGFAFACMDSKTCEHVVIKAGQRQGTATEATVLRALTHPSVVQLKGTFTYNKMTCLILPRYRTDLYCYLAAKRNLPICDILAIQRSVLRALQYLHNNSIIHRDIKSENIFINHPGDVCVGDFGAACFPVDINANRYYGWAGTIATNSPELLARDPYGPAVDIWSAGIVLFEMATGQNSLFERDGLDGNCDSERQIKLIIRRSGTHPNEFPINPTSNLRRQYIGLAKRSSRKPGSRPLWTNLYELPIDLEYLICKMLSFDARHRPSAEVLLNHSVFQTLPDPYPNPMEVGD.

Residues 93 to 378 (FVILKTFTPG…AEVLLNHSVF (286 aa)) form the Protein kinase domain. Residues 99–107 (FTPGAEGFA) and Lys122 each bind ATP. Asp206 serves as the catalytic Proton acceptor.

Belongs to the protein kinase superfamily. Ser/Thr protein kinase family. In terms of processing, phosphorylated by ORF47; this phosphorylation regulates subsequent phosphorylation of proteins 24 and 27 by ORF66. Autophosphorylated.

The protein localises to the host cytoplasm. It is found in the host nucleus. The enzyme catalyses L-seryl-[protein] + ATP = O-phospho-L-seryl-[protein] + ADP + H(+). It catalyses the reaction L-threonyl-[protein] + ATP = O-phospho-L-threonyl-[protein] + ADP + H(+). In terms of biological role, multifunctional serine/threonine kinase that plays a role in several processes including egress of virus particles from the nucleus, modulation of the actin cytoskeleton and inhibition of apoptosis. Phosphorylates proteins 24 and 27, two critical regulators of capsid budding from nucleus to endoplasmic reticulum, thereby facilitating virion egress. Modulates and redistributes host components of the nuclear envelope, including LMNA, emerin/EMD and the nuclear matrix protein MATR3. Phosphorylates envelope glycoprotein B (gB), probably to direct it to the cell surface. Promotes virus intracellular spread by restructuring host cell cytoskeleton. Blocks host apoptosis to extend cell survival and allow efficient viral replication. Promotes viral gene expression by phosphorylating host HDAC2 to reduce viral genome silencing. Down-regulates class I major histocompatibility complex (MHC-I) surface expression. Additionally, phosphorylates IE62 and targets it to the cytoplasm. The nuclear exclusion of IE62 enables the packaging of abundant levels of IE62 into virions. This Varicella-zoster virus (strain Dumas) (HHV-3) protein is Serine/threonine-protein kinase US3 homolog (66).